A 350-amino-acid polypeptide reads, in one-letter code: Glucose-6-phosphate 3-dehydrogenase (350 aa).

This sequence belongs to the Gfo/Idh/MocA family.

The enzyme catalyses D-glucose 6-phosphate + NAD(+) = 3-dehydro-D-glucose 6-phosphate + NADH + H(+). It functions in the pathway antibiotic biosynthesis; kanosamine biosynthesis. Functionally, involved in the biosynthesis of kanosamine (3-amino-3-deoxy-D-glucose), which is known to have antibiotic and antifungal properties, and to be a precursor of the antibiotic neotrehalosadiamine (3,3'-diamino-3,3'-dideoxy-alpha,beta-trehalose (NTD)). Catalyzes the oxidation of glucose 6-phosphate to 3-oxo-D-glucose 6-phosphate. It can only use NAD. This chain is Glucose-6-phosphate 3-dehydrogenase (ntdC), found in Bacillus subtilis (strain 168).